Consider the following 161-residue polypeptide: Lincosamide resistance protein (161 aa).

This is Lincosamide resistance protein (linA) from Staphylococcus haemolyticus.